A 566-amino-acid polypeptide reads, in one-letter code: MTTREYDYIICGAGSAGNVLATRLTEDPNVTVLLLEAGGPDYRFDFRTQMPAALAYPLQGRRYNWAYETDPEPHMDNRRMECGRGKGLGGSSLINGMCYIRGNALDYDNWSTHKGLENWTYLDCLPYFKKAETRDVGPNDYHGGDGPVSVTTSKPGVNPLFEAMVDAGVQAGYPRTDDLNGYQQEGFGPMDRTVTPKGRRASTARGYLDQAKGRPNLEIVTHALADRILFDGKRASGVTYLRGSERANAHARREVLVCSGAIASPQLLQRSGVGPGAWLKELDIPIVLDLPGVGQNLQDHLEMYIQYECKEPVSLYPALKWWNQPKIGLEWMLNGTGLGASNHFEAGGFIRTRDDDPWPNIQYHFLPVAINYNGSNAIEMHGFQAHVGSMRSPSRGRVKLRSRDPNAHPSILFNYMAEALDWREFRDAIRATREIMRQPALDRYRGRELNPGADCKSDKELDTFVRSRAETAFHPSCSCKMGYDDMAVVDEEGRVHGLEGLRVVDASIMPIITTGNLNAPTIMIAEKIADKIRGRQPLARVDVPYFVANGAMARNVAKAVRQPETV.

FAD is bound at residue 7–36 (DYIICGAGSAGNVLATRLTEDPNVTVLLLE). A disordered region spans residues 180-203 (NGYQQEGFGPMDRTVTPKGRRAST). Residue histidine 474 is the Proton acceptor of the active site.

It belongs to the GMC oxidoreductase family. FAD serves as cofactor.

The catalysed reaction is choline + A = betaine aldehyde + AH2. It catalyses the reaction betaine aldehyde + NAD(+) + H2O = glycine betaine + NADH + 2 H(+). It functions in the pathway amine and polyamine biosynthesis; betaine biosynthesis via choline pathway; betaine aldehyde from choline (cytochrome c reductase route): step 1/1. Involved in the biosynthesis of the osmoprotectant glycine betaine. Catalyzes the oxidation of choline to betaine aldehyde and betaine aldehyde to glycine betaine at the same rate. This Burkholderia ambifaria (strain MC40-6) protein is Oxygen-dependent choline dehydrogenase.